We begin with the raw amino-acid sequence, 487 residues long: ATP synthase subunit beta (487 aa).

171 to 178 (GGAGVGKT) lines the ATP pocket.

Belongs to the ATPase alpha/beta chains family. F-type ATPases have 2 components, CF(1) - the catalytic core - and CF(0) - the membrane proton channel. CF(1) has five subunits: alpha(3), beta(3), gamma(1), delta(1), epsilon(1). CF(0) has three main subunits: a(1), b(2) and c(9-12). The alpha and beta chains form an alternating ring which encloses part of the gamma chain. CF(1) is attached to CF(0) by a central stalk formed by the gamma and epsilon chains, while a peripheral stalk is formed by the delta and b chains.

The protein localises to the cell membrane. The enzyme catalyses ATP + H2O + 4 H(+)(in) = ADP + phosphate + 5 H(+)(out). Functionally, produces ATP from ADP in the presence of a proton gradient across the membrane. The catalytic sites are hosted primarily by the beta subunits. In Leifsonia xyli subsp. xyli (strain CTCB07), this protein is ATP synthase subunit beta.